A 75-amino-acid polypeptide reads, in one-letter code: Large ribosomal subunit protein bL31 (75 aa).

The protein belongs to the bacterial ribosomal protein bL31 family. Type A subfamily. As to quaternary structure, part of the 50S ribosomal subunit.

Binds the 23S rRNA. The chain is Large ribosomal subunit protein bL31 from Sphingopyxis alaskensis (strain DSM 13593 / LMG 18877 / RB2256) (Sphingomonas alaskensis).